The sequence spans 298 residues: Acetylglutamate kinase (298 aa).

Substrate contacts are provided by residues 69–70 (GG), arginine 91, and asparagine 191.

This sequence belongs to the acetylglutamate kinase family. ArgB subfamily.

Its subcellular location is the cytoplasm. It carries out the reaction N-acetyl-L-glutamate + ATP = N-acetyl-L-glutamyl 5-phosphate + ADP. Its pathway is amino-acid biosynthesis; L-arginine biosynthesis; N(2)-acetyl-L-ornithine from L-glutamate: step 2/4. In terms of biological role, catalyzes the ATP-dependent phosphorylation of N-acetyl-L-glutamate. The chain is Acetylglutamate kinase from Neisseria meningitidis serogroup C / serotype 2a (strain ATCC 700532 / DSM 15464 / FAM18).